Consider the following 345-residue polypeptide: Biotin synthase (345 aa).

Residues 38–256 (RQVQVSTLLS…IAVARIMMPS (219 aa)) enclose the Radical SAM core domain. [4Fe-4S] cluster is bound by residues Cys53, Cys57, and Cys60. The [2Fe-2S] cluster site is built by Cys97, Cys128, Cys188, and Arg260.

Belongs to the radical SAM superfamily. Biotin synthase family. In terms of assembly, homodimer. The cofactor is [4Fe-4S] cluster. It depends on [2Fe-2S] cluster as a cofactor.

It catalyses the reaction (4R,5S)-dethiobiotin + (sulfur carrier)-SH + 2 reduced [2Fe-2S]-[ferredoxin] + 2 S-adenosyl-L-methionine = (sulfur carrier)-H + biotin + 2 5'-deoxyadenosine + 2 L-methionine + 2 oxidized [2Fe-2S]-[ferredoxin]. The protein operates within cofactor biosynthesis; biotin biosynthesis; biotin from 7,8-diaminononanoate: step 2/2. In terms of biological role, catalyzes the conversion of dethiobiotin (DTB) to biotin by the insertion of a sulfur atom into dethiobiotin via a radical-based mechanism. The chain is Biotin synthase from Yersinia pseudotuberculosis serotype O:1b (strain IP 31758).